Reading from the N-terminus, the 462-residue chain is Glutamate--tRNA ligase (462 aa).

The 'HIGH' region signature appears at 11 to 21 (PSPTGFIHLGN). Over residues 120–131 (KPRYDGTWRPEP) the composition is skewed to basic and acidic residues. The tract at residues 120-140 (KPRYDGTWRPEPGKTLPPIPA) is disordered. Positions 243–247 (KMSKR) match the 'KMSKS' region motif. An ATP-binding site is contributed by K246.

The protein belongs to the class-I aminoacyl-tRNA synthetase family. Glutamate--tRNA ligase type 1 subfamily. Monomer.

Its subcellular location is the cytoplasm. The catalysed reaction is tRNA(Glu) + L-glutamate + ATP = L-glutamyl-tRNA(Glu) + AMP + diphosphate. Its function is as follows. Catalyzes the attachment of glutamate to tRNA(Glu) in a two-step reaction: glutamate is first activated by ATP to form Glu-AMP and then transferred to the acceptor end of tRNA(Glu). This Polaromonas sp. (strain JS666 / ATCC BAA-500) protein is Glutamate--tRNA ligase.